Reading from the N-terminus, the 366-residue chain is Chorismate synthase (366 aa).

Positions 48 and 54 each coordinate NADP(+). FMN-binding positions include 125–127 (RSS), 241–242 (NA), glycine 285, 300–304 (KPTSS), and arginine 326.

This sequence belongs to the chorismate synthase family. Homotetramer. The cofactor is FMNH2.

The enzyme catalyses 5-O-(1-carboxyvinyl)-3-phosphoshikimate = chorismate + phosphate. It participates in metabolic intermediate biosynthesis; chorismate biosynthesis; chorismate from D-erythrose 4-phosphate and phosphoenolpyruvate: step 7/7. Functionally, catalyzes the anti-1,4-elimination of the C-3 phosphate and the C-6 proR hydrogen from 5-enolpyruvylshikimate-3-phosphate (EPSP) to yield chorismate, which is the branch point compound that serves as the starting substrate for the three terminal pathways of aromatic amino acid biosynthesis. This reaction introduces a second double bond into the aromatic ring system. The chain is Chorismate synthase from Cereibacter sphaeroides (strain ATCC 17029 / ATH 2.4.9) (Rhodobacter sphaeroides).